A 209-amino-acid chain; its full sequence is Thymidylate kinase (209 aa).

Residue 13 to 20 (GLEGAGKS) participates in ATP binding.

It belongs to the thymidylate kinase family.

It catalyses the reaction dTMP + ATP = dTDP + ADP. Phosphorylation of dTMP to form dTDP in both de novo and salvage pathways of dTTP synthesis. This Shewanella sp. (strain MR-4) protein is Thymidylate kinase.